The chain runs to 232 residues: Small ribosomal subunit protein uS2 (232 aa).

It belongs to the universal ribosomal protein uS2 family.

In Alkaliphilus oremlandii (strain OhILAs) (Clostridium oremlandii (strain OhILAs)), this protein is Small ribosomal subunit protein uS2.